The chain runs to 512 residues: 2-isopropylmalate synthase (512 aa).

The Pyruvate carboxyltransferase domain maps to 4 to 266 (IQFFDTTLRD…ETNIVLNQFK (263 aa)). Residues Asp-13, His-201, His-203, and Asn-237 each coordinate Mn(2+). The interval 390 to 512 (ELKHLQVQYV…TKQVDFEEVK (123 aa)) is regulatory domain.

The protein belongs to the alpha-IPM synthase/homocitrate synthase family. LeuA type 1 subfamily. As to quaternary structure, homodimer. Mn(2+) serves as cofactor.

Its subcellular location is the cytoplasm. The enzyme catalyses 3-methyl-2-oxobutanoate + acetyl-CoA + H2O = (2S)-2-isopropylmalate + CoA + H(+). Its pathway is amino-acid biosynthesis; L-leucine biosynthesis; L-leucine from 3-methyl-2-oxobutanoate: step 1/4. Its function is as follows. Catalyzes the condensation of the acetyl group of acetyl-CoA with 3-methyl-2-oxobutanoate (2-ketoisovalerate) to form 3-carboxy-3-hydroxy-4-methylpentanoate (2-isopropylmalate). In Listeria welshimeri serovar 6b (strain ATCC 35897 / DSM 20650 / CCUG 15529 / CIP 8149 / NCTC 11857 / SLCC 5334 / V8), this protein is 2-isopropylmalate synthase.